Reading from the N-terminus, the 443-residue chain is Chromosomal replication initiator protein DnaA (443 aa).

Positions 1-76 are domain I, interacts with DnaA modulators; sequence MMDAWPRCLE…GNGEVALAVG (76 aa). The domain II stretch occupies residues 76-105; it reads GSRPRAPEPAPAPVAATIAPQAAPIAPFAG. A domain III, AAA+ region region spans residues 106–323; it reads NLDSHYTFAN…GALNTLVARA (218 aa). 4 residues coordinate ATP: glycine 151, glycine 153, lysine 154, and threonine 155. The segment at 324–443 is domain IV, binds dsDNA; sequence NFTGRSITVE…WEKLIRKLSE (120 aa).

It belongs to the DnaA family. As to quaternary structure, oligomerizes as a right-handed, spiral filament on DNA at oriC.

It is found in the cytoplasm. Plays an essential role in the initiation and regulation of chromosomal replication. ATP-DnaA binds to the origin of replication (oriC) to initiate formation of the DNA replication initiation complex once per cell cycle. Binds the DnaA box (a 9 base pair repeat at the origin) and separates the double-stranded (ds)DNA. Forms a right-handed helical filament on oriC DNA; dsDNA binds to the exterior of the filament while single-stranded (ss)DNA is stabiized in the filament's interior. The ATP-DnaA-oriC complex binds and stabilizes one strand of the AT-rich DNA unwinding element (DUE), permitting loading of DNA polymerase. After initiation quickly degrades to an ADP-DnaA complex that is not apt for DNA replication. Binds acidic phospholipids. The sequence is that of Chromosomal replication initiator protein DnaA from Xanthomonas oryzae pv. oryzae (strain KACC10331 / KXO85).